The primary structure comprises 239 residues: Ribonuclease P protein component 3 (239 aa).

Belongs to the eukaryotic/archaeal RNase P protein component 3 family. Consists of a catalytic RNA component and at least 4-5 protein subunits.

It localises to the cytoplasm. The enzyme catalyses Endonucleolytic cleavage of RNA, removing 5'-extranucleotides from tRNA precursor.. Part of ribonuclease P, a protein complex that generates mature tRNA molecules by cleaving their 5'-ends. In Methanosarcina acetivorans (strain ATCC 35395 / DSM 2834 / JCM 12185 / C2A), this protein is Ribonuclease P protein component 3.